Here is a 2453-residue protein sequence, read N- to C-terminus: Nuclear receptor corepressor 1 (2453 aa).

Residues 1 to 29 (MSSSGYPPNQGAFSTEQSRYPSHSVQYTF) show a composition bias toward polar residues. Disordered stretches follow at residues 1–116 (MSSS…QVSD), 147–177 (PAFG…SKLS), and 206–231 (QQQL…VEQK). Residues 1-373 (MSSSGYPPNQ…QRGAGLSATI (373 aa)) form an interaction with ZBTB33 and HEXIM1 region. The span at 51–64 (SQASQLLQQQQQQQ) shows a compositional bias: low complexity. 2 stretches are compositionally biased toward basic and acidic residues: residues 77–88 (PGSDRPQERRSG) and 99–116 (VDHD…QVSD). Serine 172 carries the post-translational modification Phosphoserine. A coiled-coil region spans residues 174–216 (SKLSKEELIQSMDRVDREIAKVEQQILKLKKKQQQLEEEAAKP). Residues 212-221 (EAAKPPEPEK) are compositionally biased toward basic and acidic residues. Position 224 is a phosphoserine (serine 224). The tract at residues 254–312 (FEGLGPKVELPLYNQPSDTKVYHENIKTNQVMRKKLILFFKRRNHARKQREQKICQRYD) is interaction with SIN3A/B. A coiled-coil region spans residues 299-328 (ARKQREQKICQRYDQLMEAWEKKVDRIENN). Residues 435–486 (QFMNVWTDHEKEIFKDKFIQHPKNFGLIASYLERKSVPDCVLYYYLTKKNEN) form the SANT 1 domain. Disordered regions lie at residues 497-631 (KRRG…TEEE) and 677-908 (LLQQ…PERQ). Residues 501–550 (RNQQIARPSQEEKVEEKEEDKAEKTEKKEEEKKDDEEKDDKEDSKETTKE) are a coiled coil. Basic and acidic residues-rich tracts occupy residues 509–531 (SQEE…KEEE) and 541–556 (KEDS…RTEA). The span at 592 to 604 (EAAAANAAAAATE) shows a compositional bias: low complexity. A compositionally biased stretch (pro residues) spans 605-616 (EPPPPLPPPPEP). In terms of domain architecture, SANT 2 spans 622-673 (VETSRWTEEEMEVAKKGLVEHGRNWAAIAKMVGTKSEAQCKNFYFNYKRRHN). Over residues 697–707 (QCESVASTVSA) the composition is skewed to polar residues. The segment covering 708–727 (QEDEDIEASNEEENPEDSEG) has biased composition (acidic residues). Over residues 771–787 (TTDPAPCASPSSAVPTT) the composition is skewed to low complexity. Residues 851–885 (GEGDAKERDLESTSEKTEARDEDVVVAEQIERPEP) show a composition bias toward basic and acidic residues. A Phosphoserine modification is found at serine 1011. Residues 1034–1058 (VRLPTTRPTRPPPPLIPSSKTTVAS) are disordered. Lysine 1117 participates in a covalent cross-link: Glycyl lysine isopeptide (Lys-Gly) (interchain with G-Cter in SUMO1); alternate. A Glycyl lysine isopeptide (Lys-Gly) (interchain with G-Cter in SUMO2); alternate cross-link involves residue lysine 1117. Serine 1122 carries the post-translational modification Phosphoserine. Lysine 1195 is covalently cross-linked (Glycyl lysine isopeptide (Lys-Gly) (interchain with G-Cter in SUMO2)). Serine 1206, serine 1207, serine 1274, serine 1292, and serine 1333 each carry phosphoserine. Lysine 1347 carries the N6-acetyllysine modification. Threonine 1378 carries the post-translational modification Phosphothreonine. A Glycyl lysine isopeptide (Lys-Gly) (interchain with G-Cter in SUMO2) cross-link involves residue lysine 1400. A Glycyl lysine isopeptide (Lys-Gly) (interchain with G-Cter in SUMO2); alternate cross-link involves residue lysine 1423. Lysine 1423 is modified (N6-acetyllysine; alternate). The segment at 1450 to 1544 (GEPVRARHTS…SIPAKSPVPG (95 aa)) is disordered. Serine 1459 and serine 1481 each carry phosphoserine. Residues 1459-1469 (SVVSSGPSVLR) are compositionally biased toward polar residues. The span at 1495-1514 (VSYQNTISRGSPMMNRTSDV) shows a compositional bias: polar residues. Residues 1510–2453 (RTSDVSSSKS…QYETLSDSDD (944 aa)) form an interaction with C1D region. Lysine 1525 is covalently cross-linked (Glycyl lysine isopeptide (Lys-Gly) (interchain with G-Cter in SUMO2)). Serine 1598 carries the post-translational modification Phosphoserine. Disordered regions lie at residues 1697 to 1780 (RPYN…VRTQ) and 1902 to 1939 (ALPS…RTRG). Composition is skewed to basic and acidic residues over residues 1718–1745 (AERE…RERI) and 1919–1937 (AGKD…ELRT). The CORNR box 1 motif lies at 1949 to 1953 (IDVII). Residues 1959–2060 (SDKDARERGS…SSQSEGMGQV (102 aa)) form a disordered region. Low complexity predominate over residues 1968–1979 (SQSSDSSSSLSS). Serine 1993 and serine 1997 each carry phosphoserine. Residues 2050–2129 (PSSQSEGMGQ…QSQTVLHPRP (80 aa)) are ID1. A required for interaction with RARA in the absence of its ligand region spans residues 2065-2068 (RLIT). The CORNR box 2 motif lies at 2073–2077 (ICQII). A compositionally biased stretch (polar residues) spans 2088 to 2124 (SQASTSTFQTSPSALSSTPVRTKTSSRYSPESQSQTV). The tract at residues 2088-2174 (SQASTSTFQT…SPPQGPAVHE (87 aa)) is disordered. A phosphoserine mark is found at serine 2116, serine 2134, serine 2150, serine 2165, and serine 2198. The span at 2138–2156 (LVDKSRGSRPGKSPERSHI) shows a compositional bias: basic and acidic residues. Residues 2226 to 2287 (IFRKLNSSGG…EDIIRKALMG (62 aa)) are ID2. Positions 2277 to 2281 (LEDII) match the CORNR box 3 motif. The segment at 2303-2396 (PVGIMPGSAS…RPSSTGSTQF (94 aa)) is disordered. Over residues 2310 to 2319 (SASTSVVTSS) the composition is skewed to low complexity. Threonine 2412 carries the post-translational modification Phosphothreonine. Residues serine 2449 and serine 2451 each carry the phosphoserine modification.

Belongs to the N-CoR nuclear receptor corepressors family. In terms of assembly, forms a large corepressor complex that contains SIN3A/B and histone deacetylases HDAC1 and HDAC2. This complex associates with the thyroid receptor (TR) and the retinoid acid receptor (RAR) in the absence of ligand. Interacts directly with RARA; the interaction is facilitated with RARA trimethylation. Component of the N-Cor repressor complex, at least composed of CBFA2T3, HEXIM1, NCOR1, NCOR2, HDAC3, TBL1X, TBL1XR1, CORO2A and GPS2. Interacts with ZBTB33; the interaction serves to recruit the N-CoR complex to promoter regions containing methylated CpG dinucleotides. Interacts with TRIM28 and KDM3A. Interacts (via the RD1 domain) with BAZ1A (via its N-terminal); the interaction corepresses a number of NCOR1-regulated genes. Interacts with BCL6, C1D, DACH1, HEXIM1, HDAC7, RORA, RORC, SAP30, SIAH2, SIN3A and SIN3B. May interact with DEAF1. Interacts with RXRA. Interacts with SETD5. Interacts with VDR. Interacts with ZBTB7A. Interacts with AR. Interacts with HDAC3. Ubiquitinated; mediated by SIAH2 and leading to its subsequent proteasomal degradation. Ubiquitous.

It is found in the nucleus. Its function is as follows. Mediates transcriptional repression by certain nuclear receptors. Part of a complex which promotes histone deacetylation and the formation of repressive chromatin structures which may impede the access of basal transcription factors. Participates in the transcriptional repressor activity produced by BCL6. Recruited by ZBTB7A to the androgen response elements/ARE on target genes, negatively regulates androgen receptor signaling and androgen-induced cell proliferation. Mediates the NR1D1-dependent repression and circadian regulation of TSHB expression. The NCOR1-HDAC3 complex regulates the circadian expression of the core clock gene ARTNL/BMAL1 and the genes involved in lipid metabolism in the liver. The sequence is that of Nuclear receptor corepressor 1 (Ncor1) from Mus musculus (Mouse).